A 452-amino-acid chain; its full sequence is Pup--protein ligase (452 aa).

Mg(2+) is bound at residue glutamate 9. Arginine 53 contacts ATP. Mg(2+) is bound at residue tyrosine 55. The Proton acceptor role is filled by aspartate 57. Glutamate 63 provides a ligand contact to Mg(2+). Residues threonine 66 and tryptophan 419 each coordinate ATP.

The protein belongs to the Pup ligase/Pup deamidase family. Pup-conjugating enzyme subfamily.

It catalyses the reaction ATP + [prokaryotic ubiquitin-like protein]-L-glutamate + [protein]-L-lysine = ADP + phosphate + N(6)-([prokaryotic ubiquitin-like protein]-gamma-L-glutamyl)-[protein]-L-lysine.. Its pathway is protein degradation; proteasomal Pup-dependent pathway. It participates in protein modification; protein pupylation. Functionally, catalyzes the covalent attachment of the prokaryotic ubiquitin-like protein modifier Pup to the proteasomal substrate proteins, thereby targeting them for proteasomal degradation. This tagging system is termed pupylation. The ligation reaction involves the side-chain carboxylate of the C-terminal glutamate of Pup and the side-chain amino group of a substrate lysine. The polypeptide is Pup--protein ligase (Nakamurella multipartita (strain ATCC 700099 / DSM 44233 / CIP 104796 / JCM 9543 / NBRC 105858 / Y-104) (Microsphaera multipartita)).